The sequence spans 290 residues: Serine protease 27 (290 aa).

The N-terminal stretch at 1-22 (MRRPAAVPLLLLLCFGSQRAKA) is a signal peptide. Residues 23-34 (ATACGRPRMLNR) constitute a propeptide, activation peptide. Residues 35-277 (MVGGQDTQEG…HHNWIHRIIP (243 aa)) enclose the Peptidase S1 domain. Asparagine 55 carries an N-linked (GlcNAc...) asparagine glycan. Cysteine 60 and cysteine 76 are joined by a disulfide. The active-site Charge relay system is histidine 75. A glycan (N-linked (GlcNAc...) asparagine) is linked at asparagine 79. The active-site Charge relay system is aspartate 124. 3 cysteine pairs are disulfide-bonded: cysteine 158–cysteine 235, cysteine 191–cysteine 214, and cysteine 225–cysteine 253. The active-site Charge relay system is the serine 229.

This sequence belongs to the peptidase S1 family. N-glycosylated. Expressed predominantly in the pancreas.

The protein localises to the secreted. The chain is Serine protease 27 (PRSS27) from Homo sapiens (Human).